Consider the following 424-residue polypeptide: Tyrosine--tRNA ligase (424 aa).

Tyrosine 37 is a binding site for L-tyrosine. Residues 42 to 51 carry the 'HIGH' region motif; that stretch reads PTADSLHIGS. Residues tyrosine 174 and glutamine 178 each coordinate L-tyrosine. A 'KMSKS' region motif is present at residues 234–238; sequence KFGKT. Lysine 237 is a binding site for ATP. Residues 357–422 enclose the S4 RNA-binding domain; sequence SGLIDALAAG…RGKKLYALVD (66 aa).

The protein belongs to the class-I aminoacyl-tRNA synthetase family. TyrS type 1 subfamily. In terms of assembly, homodimer.

The protein localises to the cytoplasm. The enzyme catalyses tRNA(Tyr) + L-tyrosine + ATP = L-tyrosyl-tRNA(Tyr) + AMP + diphosphate + H(+). In terms of biological role, catalyzes the attachment of tyrosine to tRNA(Tyr) in a two-step reaction: tyrosine is first activated by ATP to form Tyr-AMP and then transferred to the acceptor end of tRNA(Tyr). The polypeptide is Tyrosine--tRNA ligase (Chromobacterium violaceum (strain ATCC 12472 / DSM 30191 / JCM 1249 / CCUG 213 / NBRC 12614 / NCIMB 9131 / NCTC 9757 / MK)).